Here is a 119-residue protein sequence, read N- to C-terminus: UPF0145 protein Ta0182 (119 aa).

Belongs to the UPF0145 family.

The polypeptide is UPF0145 protein Ta0182 (Thermoplasma acidophilum (strain ATCC 25905 / DSM 1728 / JCM 9062 / NBRC 15155 / AMRC-C165)).